The primary structure comprises 476 residues: Adenosylhomocysteinase (476 aa).

Residues T67, D142, and E202 each contribute to the substrate site. 203–205 (TTT) provides a ligand contact to NAD(+). K232 and D236 together coordinate substrate. NAD(+)-binding positions include N237, 266–271 (GYGDVG), E289, N324, 345–347 (IGH), and N390.

The protein belongs to the adenosylhomocysteinase family. Requires NAD(+) as cofactor.

Its subcellular location is the cytoplasm. It carries out the reaction S-adenosyl-L-homocysteine + H2O = L-homocysteine + adenosine. It participates in amino-acid biosynthesis; L-homocysteine biosynthesis; L-homocysteine from S-adenosyl-L-homocysteine: step 1/1. In terms of biological role, may play a key role in the regulation of the intracellular concentration of adenosylhomocysteine. This is Adenosylhomocysteinase from Prochlorococcus marinus (strain MIT 9313).